The following is a 135-amino-acid chain: Global transcriptional regulator Spx 2 (135 aa).

Residue Cys-10 is part of the active site.

It belongs to the ArsC family. Spx subfamily. As to quaternary structure, interacts with the C-terminal domain of the alpha subunit of the RNAP.

Its subcellular location is the cytoplasm. Global transcriptional regulator that plays a key role in stress response and exerts either positive or negative regulation of genes. Acts by interacting with the C-terminal domain of the alpha subunit of the RNA polymerase (RNAP). This interaction can enhance binding of RNAP to the promoter region of target genes and stimulate their transcription, or block interaction of RNAP with activator. The sequence is that of Global transcriptional regulator Spx 2 from Oceanobacillus iheyensis (strain DSM 14371 / CIP 107618 / JCM 11309 / KCTC 3954 / HTE831).